The following is a 48-amino-acid chain: MPVPKKRTSISKKKIRKNFWKKKGYKAALKAFSLADSILTGTSKVIVL.

This sequence belongs to the bacterial ribosomal protein bL32 family.

The protein localises to the plastid. It localises to the chloroplast. The protein is Large ribosomal subunit protein bL32c (rpl32) of Vicia faba (Broad bean).